Consider the following 367-residue polypeptide: Quinolinate synthase (367 aa).

Iminosuccinate-binding residues include His46 and Ser63. Position 110 (Cys110) interacts with [4Fe-4S] cluster. Residues 141–143 (YVN) and Ser162 each bind iminosuccinate. Cys229 contributes to the [4Fe-4S] cluster binding site. Iminosuccinate is bound by residues 255 to 257 (HPE) and Thr272. Cys319 contributes to the [4Fe-4S] cluster binding site.

This sequence belongs to the quinolinate synthase family. Type 3 subfamily. It depends on [4Fe-4S] cluster as a cofactor.

Its subcellular location is the cytoplasm. It carries out the reaction iminosuccinate + dihydroxyacetone phosphate = quinolinate + phosphate + 2 H2O + H(+). It participates in cofactor biosynthesis; NAD(+) biosynthesis; quinolinate from iminoaspartate: step 1/1. In terms of biological role, catalyzes the condensation of iminoaspartate with dihydroxyacetone phosphate to form quinolinate. This Bacillus velezensis (strain DSM 23117 / BGSC 10A6 / LMG 26770 / FZB42) (Bacillus amyloliquefaciens subsp. plantarum) protein is Quinolinate synthase.